The sequence spans 333 residues: Phosphate acyltransferase (333 aa).

Belongs to the PlsX family. As to quaternary structure, homodimer. Probably interacts with PlsY.

The protein localises to the cytoplasm. The enzyme catalyses a fatty acyl-[ACP] + phosphate = an acyl phosphate + holo-[ACP]. The protein operates within lipid metabolism; phospholipid metabolism. Functionally, catalyzes the reversible formation of acyl-phosphate (acyl-PO(4)) from acyl-[acyl-carrier-protein] (acyl-ACP). This enzyme utilizes acyl-ACP as fatty acyl donor, but not acyl-CoA. This Thermosipho melanesiensis (strain DSM 12029 / CIP 104789 / BI429) protein is Phosphate acyltransferase.